The primary structure comprises 481 residues: UDP-N-acetylmuramate--L-alanine ligase (481 aa).

123–129 serves as a coordination point for ATP; that stretch reads GTHGKTT.

Belongs to the MurCDEF family.

It is found in the cytoplasm. The catalysed reaction is UDP-N-acetyl-alpha-D-muramate + L-alanine + ATP = UDP-N-acetyl-alpha-D-muramoyl-L-alanine + ADP + phosphate + H(+). The protein operates within cell wall biogenesis; peptidoglycan biosynthesis. In terms of biological role, cell wall formation. The polypeptide is UDP-N-acetylmuramate--L-alanine ligase (Pseudomonas fluorescens (strain SBW25)).